The sequence spans 228 residues: L-ribulose-5-phosphate 4-epimerase UlaF (228 aa).

Residues 26-27 (GN), 43-44 (SG), and 72-73 (SS) each bind substrate. The Zn(2+) site is built by D74, H93, and H95. The active-site Proton donor/acceptor is the D118. Residue H167 participates in Zn(2+) binding. Y225 (proton donor/acceptor) is an active-site residue.

The protein belongs to the aldolase class II family. AraD/FucA subfamily. The cofactor is Zn(2+).

It carries out the reaction L-ribulose 5-phosphate = D-xylulose 5-phosphate. Its pathway is cofactor degradation; L-ascorbate degradation; D-xylulose 5-phosphate from L-ascorbate: step 4/4. In terms of biological role, catalyzes the isomerization of L-ribulose 5-phosphate to D-xylulose 5-phosphate. Is involved in the anaerobic L-ascorbate utilization. This chain is L-ribulose-5-phosphate 4-epimerase UlaF, found in Shigella sonnei (strain Ss046).